The sequence spans 192 residues: Putative 3-methyladenine DNA glycosylase (192 aa).

Belongs to the DNA glycosylase MPG family.

This chain is Putative 3-methyladenine DNA glycosylase, found in Methanoculleus marisnigri (strain ATCC 35101 / DSM 1498 / JR1).